We begin with the raw amino-acid sequence, 562 residues long: Glutamate--tRNA ligase (562 aa).

The short motif at 90 to 100 (PNPSGLLHIGH) is the 'HIGH' region element.

Belongs to the class-I aminoacyl-tRNA synthetase family. Glutamate--tRNA ligase type 2 subfamily.

Its subcellular location is the cytoplasm. The catalysed reaction is tRNA(Glu) + L-glutamate + ATP = L-glutamyl-tRNA(Glu) + AMP + diphosphate. Its function is as follows. Catalyzes the attachment of glutamate to tRNA(Glu) in a two-step reaction: glutamate is first activated by ATP to form Glu-AMP and then transferred to the acceptor end of tRNA(Glu). The protein is Glutamate--tRNA ligase of Nanoarchaeum equitans (strain Kin4-M).